The chain runs to 173 residues: Shikimate kinase (173 aa).

10–15 (GSGKTT) is a binding site for ATP. Mg(2+) is bound at residue Thr14. Substrate contacts are provided by Asp32, Arg56, and Gly78. Arg117 contacts ATP. Arg135 serves as a coordination point for substrate.

It belongs to the shikimate kinase family. As to quaternary structure, monomer. Requires Mg(2+) as cofactor.

It is found in the cytoplasm. It catalyses the reaction shikimate + ATP = 3-phosphoshikimate + ADP + H(+). It participates in metabolic intermediate biosynthesis; chorismate biosynthesis; chorismate from D-erythrose 4-phosphate and phosphoenolpyruvate: step 5/7. In terms of biological role, catalyzes the specific phosphorylation of the 3-hydroxyl group of shikimic acid using ATP as a cosubstrate. In Limosilactobacillus fermentum (strain NBRC 3956 / LMG 18251) (Lactobacillus fermentum), this protein is Shikimate kinase.